We begin with the raw amino-acid sequence, 466 residues long: Chromosomal replication initiator protein DnaA (466 aa).

Residues 1-86 are domain I, interacts with DnaA modulators; sequence MSLSLWQQCL…EVGTKPVTQT (86 aa). Positions 86-129 are domain II; sequence TLKTPVHNVVAPTQTTTAQPQRVAPAARSGWDNVPAPAEPTYRS. Residues 130–346 form a domain III, AAA+ region region; that stretch reads NVNVKHTFDN…GALNRVIANA (217 aa). 4 residues coordinate ATP: Gly174, Gly176, Lys177, and Thr178. The tract at residues 347-466 is domain IV, binds dsDNA; the sequence is NFTGRAITID…FSNLIRTLSS (120 aa).

It belongs to the DnaA family. Oligomerizes as a right-handed, spiral filament on DNA at oriC.

It is found in the cytoplasm. Functionally, plays an essential role in the initiation and regulation of chromosomal replication. ATP-DnaA binds to the origin of replication (oriC) to initiate formation of the DNA replication initiation complex once per cell cycle. Binds the DnaA box (a 9 base pair repeat at the origin) and separates the double-stranded (ds)DNA. Forms a right-handed helical filament on oriC DNA; dsDNA binds to the exterior of the filament while single-stranded (ss)DNA is stabiized in the filament's interior. The ATP-DnaA-oriC complex binds and stabilizes one strand of the AT-rich DNA unwinding element (DUE), permitting loading of DNA polymerase. After initiation quickly degrades to an ADP-DnaA complex that is not apt for DNA replication. Binds acidic phospholipids. In Salmonella enteritidis PT4 (strain P125109), this protein is Chromosomal replication initiator protein DnaA.